The sequence spans 163 residues: Regulatory protein RecX (163 aa).

The disordered stretch occupies residues 1 to 21 (MSDAEDIPTGRKRRPREQTPV).

It belongs to the RecX family.

It is found in the cytoplasm. Its function is as follows. Modulates RecA activity. This chain is Regulatory protein RecX, found in Stenotrophomonas maltophilia (strain K279a).